The following is a 484-amino-acid chain: Glycogen synthase (484 aa).

K15 is a binding site for ADP-alpha-D-glucose.

This sequence belongs to the glycosyltransferase 1 family. Bacterial/plant glycogen synthase subfamily.

The catalysed reaction is [(1-&gt;4)-alpha-D-glucosyl](n) + ADP-alpha-D-glucose = [(1-&gt;4)-alpha-D-glucosyl](n+1) + ADP + H(+). Its pathway is glycan biosynthesis; glycogen biosynthesis. Functionally, synthesizes alpha-1,4-glucan chains using ADP-glucose. This is Glycogen synthase from Bacillus licheniformis (strain ATCC 14580 / DSM 13 / JCM 2505 / CCUG 7422 / NBRC 12200 / NCIMB 9375 / NCTC 10341 / NRRL NRS-1264 / Gibson 46).